Here is a 417-residue protein sequence, read N- to C-terminus: D-amino acid dehydrogenase (417 aa).

An FAD-binding site is contributed by 3–17 (IIVLGAGVIGVTSAY).

This sequence belongs to the DadA oxidoreductase family. The cofactor is FAD.

The catalysed reaction is a D-alpha-amino acid + A + H2O = a 2-oxocarboxylate + AH2 + NH4(+). Its pathway is amino-acid degradation; D-alanine degradation; NH(3) and pyruvate from D-alanine: step 1/1. In terms of biological role, oxidative deamination of D-amino acids. This Azorhizobium caulinodans (strain ATCC 43989 / DSM 5975 / JCM 20966 / LMG 6465 / NBRC 14845 / NCIMB 13405 / ORS 571) protein is D-amino acid dehydrogenase.